A 422-amino-acid polypeptide reads, in one-letter code: Histidine--tRNA ligase (422 aa).

This sequence belongs to the class-II aminoacyl-tRNA synthetase family. In terms of assembly, homodimer.

The protein localises to the cytoplasm. It catalyses the reaction tRNA(His) + L-histidine + ATP = L-histidyl-tRNA(His) + AMP + diphosphate + H(+). The chain is Histidine--tRNA ligase from Prosthecochloris aestuarii (strain DSM 271 / SK 413).